Reading from the N-terminus, the 232-residue chain is Large ribosomal subunit protein uL1 (232 aa).

Belongs to the universal ribosomal protein uL1 family. In terms of assembly, part of the 50S ribosomal subunit.

Functionally, binds directly to 23S rRNA. The L1 stalk is quite mobile in the ribosome, and is involved in E site tRNA release. Protein L1 is also a translational repressor protein, it controls the translation of the L11 operon by binding to its mRNA. This chain is Large ribosomal subunit protein uL1, found in Bacillus velezensis (strain DSM 23117 / BGSC 10A6 / LMG 26770 / FZB42) (Bacillus amyloliquefaciens subsp. plantarum).